Reading from the N-terminus, the 119-residue chain is Protein TusC (119 aa).

Belongs to the DsrF/TusC family. As to quaternary structure, heterohexamer, formed by a dimer of trimers. The hexameric TusBCD complex contains 2 copies each of TusB, TusC and TusD. The TusBCD complex interacts with TusE.

It localises to the cytoplasm. Part of a sulfur-relay system required for 2-thiolation of 5-methylaminomethyl-2-thiouridine (mnm(5)s(2)U) at tRNA wobble positions. In Shigella dysenteriae serotype 1 (strain Sd197), this protein is Protein TusC.